Here is a 194-residue protein sequence, read N- to C-terminus: Adenylate kinase (194 aa).

ATP is bound at residue 12-17 (GSGKTT). Positions 34 to 63 (STGDLLREEVKKGTPLGATIASFIDNGQLV) are NMP. Residues Thr35, Arg40, 61–63 (QLV), 88–91 (GFPR), and Gln95 contribute to the AMP site. Residues 130–136 (GRARGAD) form an LID region. An ATP-binding site is contributed by Arg131. AMP contacts are provided by Arg133 and Arg145. Arg173 contacts ATP.

The protein belongs to the adenylate kinase family. In terms of assembly, monomer.

Its subcellular location is the cytoplasm. The catalysed reaction is AMP + ATP = 2 ADP. It functions in the pathway purine metabolism; AMP biosynthesis via salvage pathway; AMP from ADP: step 1/1. Catalyzes the reversible transfer of the terminal phosphate group between ATP and AMP. Plays an important role in cellular energy homeostasis and in adenine nucleotide metabolism. This chain is Adenylate kinase, found in Nitratiruptor sp. (strain SB155-2).